A 251-amino-acid polypeptide reads, in one-letter code: 3-deoxy-manno-octulosonate cytidylyltransferase (251 aa).

It belongs to the KdsB family.

The protein localises to the cytoplasm. It catalyses the reaction 3-deoxy-alpha-D-manno-oct-2-ulosonate + CTP = CMP-3-deoxy-beta-D-manno-octulosonate + diphosphate. The protein operates within nucleotide-sugar biosynthesis; CMP-3-deoxy-D-manno-octulosonate biosynthesis; CMP-3-deoxy-D-manno-octulosonate from 3-deoxy-D-manno-octulosonate and CTP: step 1/1. It functions in the pathway bacterial outer membrane biogenesis; lipopolysaccharide biosynthesis. Functionally, activates KDO (a required 8-carbon sugar) for incorporation into bacterial lipopolysaccharide in Gram-negative bacteria. The protein is 3-deoxy-manno-octulosonate cytidylyltransferase of Agrobacterium fabrum (strain C58 / ATCC 33970) (Agrobacterium tumefaciens (strain C58)).